A 121-amino-acid polypeptide reads, in one-letter code: Large ribosomal subunit protein bL19 (121 aa).

It belongs to the bacterial ribosomal protein bL19 family.

Its function is as follows. This protein is located at the 30S-50S ribosomal subunit interface and may play a role in the structure and function of the aminoacyl-tRNA binding site. In Borreliella burgdorferi (strain ATCC 35210 / DSM 4680 / CIP 102532 / B31) (Borrelia burgdorferi), this protein is Large ribosomal subunit protein bL19 (rplS).